A 210-amino-acid polypeptide reads, in one-letter code: dTTP/UTP pyrophosphatase (210 aa).

Catalysis depends on D85, which acts as the Proton acceptor.

It belongs to the Maf family. YhdE subfamily. A divalent metal cation is required as a cofactor.

Its subcellular location is the cytoplasm. It carries out the reaction dTTP + H2O = dTMP + diphosphate + H(+). The enzyme catalyses UTP + H2O = UMP + diphosphate + H(+). In terms of biological role, nucleoside triphosphate pyrophosphatase that hydrolyzes dTTP and UTP. May have a dual role in cell division arrest and in preventing the incorporation of modified nucleotides into cellular nucleic acids. The chain is dTTP/UTP pyrophosphatase from Saccharophagus degradans (strain 2-40 / ATCC 43961 / DSM 17024).